The chain runs to 784 residues: Probable phosphoketolase (784 aa).

Belongs to the XFP family. Thiamine diphosphate serves as cofactor.

The sequence is that of Probable phosphoketolase from Rhodopseudomonas palustris (strain HaA2).